The primary structure comprises 247 residues: uncharacterized protein (247 aa).

Helical transmembrane passes span 108 to 128, 136 to 156, and 194 to 214; these read WYIN…FLII, IFSV…NIIC, and GAKL…LFFI.

It localises to the membrane. This is an uncharacterized protein from Caenorhabditis elegans.